Consider the following 587-residue polypeptide: Phosphomethylpyrimidine synthase (587 aa).

Residues N218, M247, Y276, H312, 332–334, 373–376, and E412 contribute to the substrate site; these read SRG and DGLR. H416 contacts Zn(2+). Y439 contacts substrate. Residue H480 coordinates Zn(2+). [4Fe-4S] cluster contacts are provided by C560, C563, and C568.

Belongs to the ThiC family. [4Fe-4S] cluster serves as cofactor.

The catalysed reaction is 5-amino-1-(5-phospho-beta-D-ribosyl)imidazole + S-adenosyl-L-methionine = 4-amino-2-methyl-5-(phosphooxymethyl)pyrimidine + CO + 5'-deoxyadenosine + formate + L-methionine + 3 H(+). Its pathway is cofactor biosynthesis; thiamine diphosphate biosynthesis. Its function is as follows. Catalyzes the synthesis of the hydroxymethylpyrimidine phosphate (HMP-P) moiety of thiamine from aminoimidazole ribotide (AIR) in a radical S-adenosyl-L-methionine (SAM)-dependent reaction. The polypeptide is Phosphomethylpyrimidine synthase (Porphyromonas gingivalis (strain ATCC 33277 / DSM 20709 / CIP 103683 / JCM 12257 / NCTC 11834 / 2561)).